The following is a 2269-amino-acid chain: Neuron navigator 3 (2269 aa).

Residues 55–162 (SKICKIYTDW…LFFILSRYKQ (108 aa)) form the Calponin-homology (CH) domain. The segment covering 186–207 (TGAAQLSQHKTQDMQSSLTARY) has biased composition (polar residues). Disordered regions lie at residues 186 to 358 (TGAA…RSML) and 388 to 532 (SEFG…NKGS). Residues 236–252 (GSGSNSSKGSSNLNRRS) are compositionally biased toward low complexity. Composition is skewed to polar residues over residues 267 to 291 (ASGN…QQLA) and 305 to 319 (SKSM…SSML). Residues 323 to 333 (PPSPTSSPTPP) show a composition bias toward pro residues. Over residues 346–356 (ASKSAPGNQRS) the composition is skewed to polar residues. Over residues 411–432 (PSASAFAPPSKSNNCKNHNNKS) the composition is skewed to low complexity. Over residues 505–518 (TATSKPAGTQSCVP) the composition is skewed to polar residues. Positions 644–672 (ETRRMRTVKNIADLRQNLEETMSSLRGTQ) form a coiled coil. 6 disordered regions span residues 692 to 737 (GRGL…STTV), 756 to 776 (ASGA…VGPE), 836 to 1036 (VKEM…IPGP), 1050 to 1079 (SGSA…TSLD), 1097 to 1412 (VPLQ…GTTC), and 1461 to 1487 (GGSA…TDEV). 2 stretches are compositionally biased toward polar residues: residues 699-716 (SSRS…SSPR) and 727-737 (PPRSSAGSTTV). Residues 847 to 860 (DSSSVSSGLSDTLD) are compositionally biased toward low complexity. The span at 874–886 (GISSRKSKAAQSN) shows a compositional bias: polar residues. Residues 919-932 (PSCKWKTSSPSSSC) show a composition bias toward low complexity. Over residues 939-950 (QKTGLPMSQTGS) the composition is skewed to polar residues. Basic and acidic residues predominate over residues 977–989 (GKTDDAKASEKGK). Over residues 1110 to 1137 (SSSGGSSVVSRSGHRSSSSSIDSNVSGK) the composition is skewed to low complexity. Positions 1163–1172 (GRSSPVTINQ) are enriched in polar residues. 2 stretches are compositionally biased toward low complexity: residues 1185–1202 (GTGL…TQSG) and 1223–1234 (GSKASSKPSSPG). Over residues 1266 to 1276 (GSLGSMGGQSG) the composition is skewed to gly residues. Low complexity predominate over residues 1292–1305 (SPASSPASGLSLPS). Composition is skewed to polar residues over residues 1313-1339 (NLSS…SSES) and 1354-1363 (RTGSVKSTLS). Residues 1381 to 1391 (TSHEEGKEWLR) are compositionally biased toward basic and acidic residues. Over residues 1392–1412 (SHSTGGLQDTGSPLSPPGTTC) the composition is skewed to polar residues. Residues 1499–1586 (SSLYSAQIRK…TDAQTAIQVA (88 aa)) are a coiled coil. Disordered stretches follow at residues 1602–1672 (QHSS…PSSP), 1756–1792 (NDRL…SRQS), and 2207–2269 (GYSS…ESAL). 2 stretches are compositionally biased toward low complexity: residues 1605–1623 (SESM…LGSA) and 1765–1792 (TTPA…SRQS). Positions 1697–1765 (CECTEAEAEI…NDRLKSSGNT (69 aa)) form a coiled coil. Over residues 2208–2224 (YSSSKDGAASKQVSQSD) the composition is skewed to polar residues.

It belongs to the Nav/unc-53 family. Interacts with F-actin.

It localises to the nucleus outer membrane. The protein localises to the golgi apparatus. It is found in the cell projection. The protein resides in the lamellipodium. Its subcellular location is the filopodium. Its function is as follows. Involved in liver and heart organogenesis during embryo development. Plays a role in the migration of hepatoblasts from the intestinal endoderm during liver organogenesis; possibly by modulating actin polymerization during hepatoblast outgrowth. May be involved in neuron regeneration. This Danio rerio (Zebrafish) protein is Neuron navigator 3 (nav3).